The primary structure comprises 188 residues: Protease-associated domain-containing protein 1 (188 aa).

The N-terminal stretch at Met1–Ala21 is a signal peptide. Residues Ile83–Trp163 form the PA domain. Asn121 and Asn171 each carry an N-linked (GlcNAc...) asparagine glycan.

N-glycosylated; required for efficient secretion. In terms of tissue distribution, expressed in metabolically active tissues such as liver, muscle, adipose, and heart and different brain regions like cortex and hypothalamus, expression is acutely regulated by the nutritional state.

It is found in the secreted. In terms of biological role, plays a role in the modulation of physical activity and adiposity. The sequence is that of Protease-associated domain-containing protein 1 from Mus musculus (Mouse).